The primary structure comprises 81 residues: Large ribosomal subunit protein bL28 (81 aa).

It belongs to the bacterial ribosomal protein bL28 family. In terms of assembly, part of the 50S ribosomal subunit.

This is Large ribosomal subunit protein bL28 from Deinococcus radiodurans (strain ATCC 13939 / DSM 20539 / JCM 16871 / CCUG 27074 / LMG 4051 / NBRC 15346 / NCIMB 9279 / VKM B-1422 / R1).